The chain runs to 557 residues: Formate--tetrahydrofolate ligase (557 aa).

65 to 72 serves as a coordination point for ATP; it reads TPAGEGKT.

Belongs to the formate--tetrahydrofolate ligase family. As to quaternary structure, homotetramer.

It catalyses the reaction (6S)-5,6,7,8-tetrahydrofolate + formate + ATP = (6R)-10-formyltetrahydrofolate + ADP + phosphate. Its pathway is one-carbon metabolism; tetrahydrofolate interconversion. The polypeptide is Formate--tetrahydrofolate ligase (fhs) (Methylorubrum extorquens (strain ATCC 14718 / DSM 1338 / JCM 2805 / NCIMB 9133 / AM1) (Methylobacterium extorquens)).